The chain runs to 368 residues: Quinolinate synthase (368 aa).

Residues histidine 46 and serine 63 each contribute to the iminosuccinate site. Cysteine 110 provides a ligand contact to [4Fe-4S] cluster. Iminosuccinate is bound by residues 141 to 143 (YVN) and serine 162. Cysteine 230 is a [4Fe-4S] cluster binding site. Iminosuccinate is bound by residues 256–258 (HPE) and threonine 273. Cysteine 320 serves as a coordination point for [4Fe-4S] cluster.

It belongs to the quinolinate synthase family. Type 3 subfamily. [4Fe-4S] cluster is required as a cofactor.

The protein resides in the cytoplasm. The enzyme catalyses iminosuccinate + dihydroxyacetone phosphate = quinolinate + phosphate + 2 H2O + H(+). It participates in cofactor biosynthesis; NAD(+) biosynthesis; quinolinate from iminoaspartate: step 1/1. Its function is as follows. Catalyzes the condensation of iminoaspartate with dihydroxyacetone phosphate to form quinolinate. This chain is Quinolinate synthase, found in Bacillus cytotoxicus (strain DSM 22905 / CIP 110041 / 391-98 / NVH 391-98).